The primary structure comprises 622 residues: DNA topoisomerase 3 (622 aa).

Residues 2 to 148 (RVLCVAEKNS…SIQVIRADFN (147 aa)) form the Toprim domain. In terms of domain architecture, Topo IA-type catalytic spans 166-596 (SKNAADAVDA…MILTQFRDVF (431 aa)). The active-site O-(5'-phospho-DNA)-tyrosine intermediate is the tyrosine 330.

Belongs to the type IA topoisomerase family. In terms of assembly, interacts with hus2.

It catalyses the reaction ATP-independent breakage of single-stranded DNA, followed by passage and rejoining.. Releases the supercoiling and torsional tension of DNA introduced during the DNA replication and transcription by transiently cleaving and rejoining one strand of the DNA duplex. Introduces a single-strand break via transesterification at a target site in duplex DNA. The scissile phosphodiester is attacked by the catalytic tyrosine of the enzyme, resulting in the formation of a DNA-(5'-phosphotyrosyl)-enzyme intermediate and the expulsion of a 3'-OH DNA strand. The free DNA strand than undergoes passage around the unbroken strand thus removing DNA supercoils. Finally, in the religation step, the DNA 3'-OH attacks the covalent intermediate to expel the active-site tyrosine and restore the DNA phosphodiester backbone. This chain is DNA topoisomerase 3 (top3), found in Schizosaccharomyces pombe (strain 972 / ATCC 24843) (Fission yeast).